Consider the following 585-residue polypeptide: Trehalase (585 aa).

Positions Met1–Ala32 are cleaved as a signal peptide. Substrate contacts are provided by residues Arg184 and Trp191–Asp192. Asn207 carries N-linked (GlcNAc...) asparagine glycosylation. Substrate-binding positions include Asn228, Arg237–Gln239, Arg302–Glu304, and Gly336. Asp338 functions as the Proton donor/acceptor in the catalytic mechanism. Asn348 is a glycosylation site (N-linked (GlcNAc...) asparagine). Glu535 acts as the Proton donor/acceptor in catalysis. Glu550 is a binding site for substrate.

Belongs to the glycosyl hydrolase 37 family. Expressed by the venom gland.

The protein resides in the secreted. The catalysed reaction is alpha,alpha-trehalose + H2O = alpha-D-glucose + beta-D-glucose. The chain is Trehalase (tre1) from Pimpla hypochondriaca (Parasitoid wasp).